Here is a 546-residue protein sequence, read N- to C-terminus: Mitochondrial distribution and morphology protein 34 (546 aa).

In terms of domain architecture, SMP-LTD spans 1 to 195; that stretch reads MAFNFNWSPL…LPAIIHRLSL (195 aa). 5 disordered regions span residues 208 to 230, 299 to 319, 344 to 382, 395 to 416, and 517 to 546; these read EVKA…QDPV, SHGG…SHVA, TMGA…CTDS, SSSA…SPDA, and RRIQ…AYGQ. The segment covering 349-362 has biased composition (basic residues); the sequence is RHPRTRPSRKHKRR. Basic and acidic residues predominate over residues 363–374; that stretch reads VVDLRKPQKLDD.

It belongs to the MDM34 family. In terms of assembly, component of the ER-mitochondria encounter structure (ERMES) or MDM complex, composed of MMM1, MDM10, MDM12 and MDM34.

The protein localises to the mitochondrion outer membrane. In terms of biological role, component of the ERMES/MDM complex, which serves as a molecular tether to connect the endoplasmic reticulum (ER) and mitochondria. Components of this complex are involved in the control of mitochondrial shape and protein biogenesis, and function in nonvesicular lipid trafficking between the ER and mitochondria. MDM34 is required for the interaction of the ER-resident membrane protein MMM1 and the outer mitochondrial membrane-resident beta-barrel protein MDM10. This chain is Mitochondrial distribution and morphology protein 34, found in Arthroderma otae (strain ATCC MYA-4605 / CBS 113480) (Microsporum canis).